A 292-amino-acid polypeptide reads, in one-letter code: 4-amino-L-phenylalanine/4-methylamino-L-phenylalanine methyltransferase (292 aa).

128–132 (CAGPG) contributes to the S-adenosyl-L-methionine binding site.

This sequence belongs to the protein N5-glutamine methyltransferase family.

It carries out the reaction 4-amino-L-phenylalanine + S-adenosyl-L-methionine = 4-methylamino-L-phenylalanine + S-adenosyl-L-homocysteine + H(+). The catalysed reaction is 4-methylamino-L-phenylalanine + S-adenosyl-L-methionine = 4-dimethylamino-L-phenylalanine + S-adenosyl-L-homocysteine + H(+). It functions in the pathway antibiotic biosynthesis. Functionally, involved in pristinamycin I biosynthesis. Catalyzes the SAM-dependent methylation of 4-amino-L-phenylalanine (PAPA) to 4-methylamino-L-phenylalanine (MMPAPA), and of MMPAPA to 4-dimethylamino-L-phenylalanine (DMPAPA). This chain is 4-amino-L-phenylalanine/4-methylamino-L-phenylalanine methyltransferase, found in Streptomyces pristinaespiralis.